Consider the following 304-residue polypeptide: GDP-6-deoxy-D-mannose reductase (304 aa).

NADP(+) contacts are provided by residues 13 to 14 (FV) and 39 to 40 (DL). Substrate is bound at residue 105-106 (SG). Tyr131 provides a ligand contact to NADP(+). Residues Asn160, Arg200, and 260 to 263 (RRAE) contribute to the substrate site.

It belongs to the NAD(P)-dependent epimerase/dehydratase family. GDP-6-deoxy-D-mannose reductase subfamily.

The catalysed reaction is GDP-alpha-D-rhamnose + NAD(+) = GDP-4-dehydro-alpha-D-rhamnose + NADH + H(+). It catalyses the reaction GDP-alpha-D-rhamnose + NADP(+) = GDP-4-dehydro-alpha-D-rhamnose + NADPH + H(+). Functionally, reductase that catalyzes the conversion of GDP-6-deoxy-D-mannose to GDP-4-dehydro-6-deoxy-D-mannose (GDP-D-rhamnose). The polypeptide is GDP-6-deoxy-D-mannose reductase (rmd) (Pseudomonas aeruginosa (strain ATCC 15692 / DSM 22644 / CIP 104116 / JCM 14847 / LMG 12228 / 1C / PRS 101 / PAO1)).